The chain runs to 364 residues: Anhydro-N-acetylmuramic acid kinase (364 aa).

11 to 18 (GSSLDGID) contributes to the ATP binding site.

Belongs to the anhydro-N-acetylmuramic acid kinase family.

It carries out the reaction 1,6-anhydro-N-acetyl-beta-muramate + ATP + H2O = N-acetyl-D-muramate 6-phosphate + ADP + H(+). It functions in the pathway amino-sugar metabolism; 1,6-anhydro-N-acetylmuramate degradation. Its pathway is cell wall biogenesis; peptidoglycan recycling. Its function is as follows. Catalyzes the specific phosphorylation of 1,6-anhydro-N-acetylmuramic acid (anhMurNAc) with the simultaneous cleavage of the 1,6-anhydro ring, generating MurNAc-6-P. Is required for the utilization of anhMurNAc either imported from the medium or derived from its own cell wall murein, and thus plays a role in cell wall recycling. This chain is Anhydro-N-acetylmuramic acid kinase, found in Pseudomonas syringae pv. tomato (strain ATCC BAA-871 / DC3000).